Consider the following 32-residue polypeptide: Protamine-1 (32 aa).

The disordered stretch occupies residues 1–32 (PRRRRASSGRPVRRRRRPKMSRRRRRGGRRRR).

Testis.

The protein localises to the nucleus. It is found in the chromosome. Protamines substitute for histones in the chromatin of sperm during the haploid phase of spermatogenesis. They compact sperm DNA into a highly condensed, stable and inactive complex. This is Protamine-1 from Esox lucius (Northern pike).